The chain runs to 327 residues: ABC transporter periplasmic-binding protein YphF (327 aa).

An N-terminal signal peptide occupies residues 1-26 (MPTKMRTTRNLLLMATLLGSALFARA).

The protein belongs to the bacterial solute-binding protein 2 family.

Its subcellular location is the periplasm. In terms of biological role, probably part of the binding-protein-dependent transport system YphDEF. The protein is ABC transporter periplasmic-binding protein YphF (yphF) of Escherichia coli (strain K12).